The chain runs to 123 residues: U11/U12 small nuclear ribonucleoprotein 25 kDa protein (123 aa).

The Ubiquitin-like domain maps to 32–123 (MTVRVCKMDG…VSFIKKLRQK (92 aa)).

Component of the U11/U12 snRNPs that are part of the U12-type spliceosome.

The protein localises to the nucleus. This Bos taurus (Bovine) protein is U11/U12 small nuclear ribonucleoprotein 25 kDa protein (SNRNP25).